The following is a 177-amino-acid chain: Adenine phosphoribosyltransferase (177 aa).

The protein belongs to the purine/pyrimidine phosphoribosyltransferase family. In terms of assembly, homodimer.

Its subcellular location is the cytoplasm. It carries out the reaction AMP + diphosphate = 5-phospho-alpha-D-ribose 1-diphosphate + adenine. It functions in the pathway purine metabolism; AMP biosynthesis via salvage pathway; AMP from adenine: step 1/1. Catalyzes a salvage reaction resulting in the formation of AMP, that is energically less costly than de novo synthesis. This is Adenine phosphoribosyltransferase from Chlorobaculum parvum (strain DSM 263 / NCIMB 8327) (Chlorobium vibrioforme subsp. thiosulfatophilum).